A 141-amino-acid polypeptide reads, in one-letter code: Drosulfakinins (141 aa).

The N-terminal stretch at 1–31 (MGLRRCTHFATLVMPLWALALFFLVVMQVPA) is a signal peptide. Residues 32-73 (QTTSLQISKEDRRLQELESKMGAESEQPNANLVGPSISRFGD) constitute a propeptide that is removed on maturation. The disordered stretch occupies residues 49 to 69 (ESKMGAESEQPNANLVGPSIS). Phenylalanine amide is present on F82. Positions 86-111 (VPLISRPMIPIELDLLMDNDDERTKA) are excised as a propeptide. The residue at position 117 (Y117) is a Sulfotyrosine. F122 carries the post-translational modification Phenylalanine amide. Y134 carries the sulfotyrosine modification. At F139 the chain carries Phenylalanine amide.

This sequence belongs to the gastrin/cholecystokinin family.

The protein resides in the secreted. Drosulfakinin-0 (DSK 0) plays diverse biological roles including regulating gut muscle contraction in adults but not in larvae. In Drosophila erecta (Fruit fly), this protein is Drosulfakinins.